Here is a 149-residue protein sequence, read N- to C-terminus: Alpha-amylase/trypsin inhibitor CMb (149 aa).

Positions 1 to 24 are cleaved as a signal peptide; the sequence is MASKSSCDLLLAAVLVSIFAAVAA. A glycan (N-linked (GlcNAc...) asparagine) is linked at Asn124.

This sequence belongs to the protease inhibitor I6 (cereal trypsin/alpha-amylase inhibitor) family. Heterotetramer of one CMa, one CMb and two CMd chains. In terms of processing, five disulfide bonds, which are essential for the inhibitor activity, are probably present. Post-translationally, exists both in a glycosylated and in an unglycosylated form. The glycosylated form is a potent allergen. In terms of tissue distribution, endosperm.

It is found in the secreted. Its function is as follows. Part of a complex with inhibitory activity, but CMb is inactive as a separate subunit. This chain is Alpha-amylase/trypsin inhibitor CMb (IAT2), found in Hordeum vulgare (Barley).